A 373-amino-acid chain; its full sequence is Arfaptin-1 (373 aa).

Positions 1–47 are disordered; sequence MAQESPKNSAAEIPVTSNGEVDDSREHSFNRDLKHSLPSGLGLSETQ. Ala-2 is subject to N-acetylalanine. Phosphoserine occurs at positions 5, 28, 36, 39, 69, 79, and 132. Over residues 22–35 the composition is skewed to basic and acidic residues; that stretch reads DDSREHSFNRDLKH. Positions 153-353 constitute an AH domain; that stretch reads TVDLELEAQI…NQKQLEQTLK (201 aa). Thr-361 carries the post-translational modification Phosphothreonine.

In terms of assembly, forms homodimers or heterodimers with ARFIP2. Interacts with non-myristoylated GTP-bound ARF3, but not to GDP-bound ARF3. Interacts with ARF1. Binds with lower affinity to ARF5 and with very little affinity to ARF6. Interacts with ARL1. Interacts with ATG9A. In terms of processing, phosphorylated by PRKD1; phosphorylation delocalizes ARFIP1 from the Golgi and disrupts its ability to inhibit the activity of ADP-ribosylation factor, an important component of the vesicle scission machinery. As to expression, ubiquitously expressed. Higher levels in liver, pancreas, placenta, skeletal muscle and heart.

It is found in the golgi apparatus. It localises to the trans-Golgi network membrane. In terms of biological role, plays a role in controlling biogenesis of secretory granules at the trans-Golgi network. Mechanistically, binds ARF-GTP at the neck of a growing secretory granule precursor and forms a protective scaffold. Once the granule precursor has been completely loaded, active PRKD1 phosphorylates ARFIP1 and releases it from ARFs. In turn, ARFs induce fission. Through this mechanism, ensures proper secretory granule formation at the Golgi of pancreatic beta cells. This is Arfaptin-1 from Homo sapiens (Human).